The primary structure comprises 217 residues: Carboxylesterase Culp1 (217 aa).

The N-terminal stretch at 1-32 is a signal peptide; it reads MTPRSLVRIVGVVVATTLALVSAPAGGRAAHA. Cys35 and Cys107 form a disulfide bridge. Ser118 (nucleophile) is an active-site residue. A disulfide bridge connects residues Cys177 and Cys184. Asp181 is a catalytic residue. Residue His193 is the Proton donor/acceptor of the active site.

It belongs to the cutinase family.

The protein resides in the secreted. The enzyme catalyses a fatty acid ester + H2O = an aliphatic alcohol + a fatty acid + H(+). In terms of biological role, shows esterase activity, with a preference for short- and medium-chain fatty acids. This chain is Carboxylesterase Culp1, found in Mycobacterium bovis (strain ATCC BAA-935 / AF2122/97).